Consider the following 305-residue polypeptide: Tetraacyldisaccharide 4'-kinase (305 aa).

Position 39 to 46 (39 to 46 (SVGGNGKT)) interacts with ATP.

Belongs to the LpxK family.

The catalysed reaction is a lipid A disaccharide + ATP = a lipid IVA + ADP + H(+). It functions in the pathway glycolipid biosynthesis; lipid IV(A) biosynthesis; lipid IV(A) from (3R)-3-hydroxytetradecanoyl-[acyl-carrier-protein] and UDP-N-acetyl-alpha-D-glucosamine: step 6/6. Functionally, transfers the gamma-phosphate of ATP to the 4'-position of a tetraacyldisaccharide 1-phosphate intermediate (termed DS-1-P) to form tetraacyldisaccharide 1,4'-bis-phosphate (lipid IVA). The polypeptide is Tetraacyldisaccharide 4'-kinase (Pseudoalteromonas atlantica (strain T6c / ATCC BAA-1087)).